A 293-amino-acid chain; its full sequence is 4-diphosphocytidyl-2-C-methyl-D-erythritol kinase (293 aa).

Residue lysine 11 is part of the active site. Residue proline 96–serine 106 coordinates ATP. Residue aspartate 138 is part of the active site.

It belongs to the GHMP kinase family. IspE subfamily.

It carries out the reaction 4-CDP-2-C-methyl-D-erythritol + ATP = 4-CDP-2-C-methyl-D-erythritol 2-phosphate + ADP + H(+). It functions in the pathway isoprenoid biosynthesis; isopentenyl diphosphate biosynthesis via DXP pathway; isopentenyl diphosphate from 1-deoxy-D-xylulose 5-phosphate: step 3/6. Functionally, catalyzes the phosphorylation of the position 2 hydroxy group of 4-diphosphocytidyl-2C-methyl-D-erythritol. The protein is 4-diphosphocytidyl-2-C-methyl-D-erythritol kinase of Xanthobacter autotrophicus (strain ATCC BAA-1158 / Py2).